The sequence spans 200 residues: Phospholipase A2 inhibitor NAI (200 aa).

Residues 1-19 form the signal peptide; it reads MKSLLFCCLFGTFLATGMC. 8 cysteine pairs are disulfide-bonded: Cys-22–Cys-46, Cys-25–Cys-32, Cys-39–Cys-67, Cys-73–Cys-94, Cys-95–Cys-100, Cys-120–Cys-145, Cys-138–Cys-165, and Cys-171–Cys-191.

It belongs to the CNF-like-inhibitor family. In terms of assembly, heterotrimer of 2 subunits A and 1 subunit B; non-covalently linked. In terms of tissue distribution, expressed by the liver.

It localises to the secreted. In terms of biological role, inhibits the enzymatic activity of all phospholipase A2 tested, binding with micromole to nanomole affinity. The protein is Phospholipase A2 inhibitor NAI of Notechis ater (Black tiger snake).